A 380-amino-acid polypeptide reads, in one-letter code: Queuine tRNA-ribosyltransferase (380 aa).

Asp96 functions as the Proton acceptor in the catalytic mechanism. Substrate-binding positions include 96-100, Asp150, Gln193, and Gly220; that span reads DSGGF. An RNA binding region spans residues 251–257; it reads GVGAPDS. Asp270 (nucleophile) is an active-site residue. The segment at 275–279 is RNA binding; important for wobble base 34 recognition; that stretch reads TRIAR. Residues Cys308, Cys310, Cys313, and His339 each contribute to the Zn(2+) site.

This sequence belongs to the queuine tRNA-ribosyltransferase family. Homodimer. Within each dimer, one monomer is responsible for RNA recognition and catalysis, while the other monomer binds to the replacement base PreQ1. Zn(2+) serves as cofactor.

It carries out the reaction 7-aminomethyl-7-carbaguanine + guanosine(34) in tRNA = 7-aminomethyl-7-carbaguanosine(34) in tRNA + guanine. The protein operates within tRNA modification; tRNA-queuosine biosynthesis. Its function is as follows. Catalyzes the base-exchange of a guanine (G) residue with the queuine precursor 7-aminomethyl-7-deazaguanine (PreQ1) at position 34 (anticodon wobble position) in tRNAs with GU(N) anticodons (tRNA-Asp, -Asn, -His and -Tyr). Catalysis occurs through a double-displacement mechanism. The nucleophile active site attacks the C1' of nucleotide 34 to detach the guanine base from the RNA, forming a covalent enzyme-RNA intermediate. The proton acceptor active site deprotonates the incoming PreQ1, allowing a nucleophilic attack on the C1' of the ribose to form the product. After dissociation, two additional enzymatic reactions on the tRNA convert PreQ1 to queuine (Q), resulting in the hypermodified nucleoside queuosine (7-(((4,5-cis-dihydroxy-2-cyclopenten-1-yl)amino)methyl)-7-deazaguanosine). This is Queuine tRNA-ribosyltransferase from Streptococcus uberis (strain ATCC BAA-854 / 0140J).